A 398-amino-acid chain; its full sequence is tRNA-specific 2-thiouridylase MnmA (398 aa).

Residues 18–25 and Leu-44 each bind ATP; that span reads AMSGGVDS. Cys-112 (nucleophile) is an active-site residue. Cys-112 and Cys-213 are joined by a disulfide. An ATP-binding site is contributed by Gly-136. The interaction with tRNA stretch occupies residues 163-165; sequence RDQ. Cys-213 functions as the Cysteine persulfide intermediate in the catalytic mechanism.

It belongs to the MnmA/TRMU family.

Its subcellular location is the cytoplasm. It catalyses the reaction S-sulfanyl-L-cysteinyl-[protein] + uridine(34) in tRNA + AH2 + ATP = 2-thiouridine(34) in tRNA + L-cysteinyl-[protein] + A + AMP + diphosphate + H(+). In terms of biological role, catalyzes the 2-thiolation of uridine at the wobble position (U34) of tRNA, leading to the formation of s(2)U34. This is tRNA-specific 2-thiouridylase MnmA from Sinorhizobium fredii (strain NBRC 101917 / NGR234).